The chain runs to 314 residues: Melanoma-associated antigen 3 (314 aa).

Basic and acidic residues predominate over residues 1 to 20; sequence MPLEQRSQHCKPEEGLEARG. A disordered region spans residues 1-99; that stretch reads MPLEQRSQHC…QEEEGPSTFP (99 aa). Over residues 21–44 the composition is skewed to low complexity; it reads EALGLVGAQAPATEEQEAASSSST. The span at 65–87 shows a compositional bias: polar residues; the sequence is PQGASSLPTTMNYPLWSQSYEDS. The MAGE domain occupies 109 to 308; it reads LSRKVAELVH…ISYPPLHEWV (200 aa).

As to quaternary structure, interacts with TRIM28. Post-translationally, ubiquitinated by the DCX(DCAF12) complex specifically recognizes the diglutamate (Glu-Glu) at the C-terminus, leading to its degradation. Expressed in many tumors of several types, such as melanoma, head and neck squamous cell carcinoma, lung carcinoma and breast carcinoma, but not in normal tissues except for testes and placenta. Never expressed in kidney tumors, Leukemias and lymphomas.

Functionally, activator of ubiquitin ligase activity of RING-type zinc finger-containing E3 ubiquitin-protein ligases that acts as a repressor of autophagy. May enhance ubiquitin ligase activity of TRIM28 and stimulate p53/TP53 ubiquitination by TRIM28. Proposed to act through recruitment and/or stabilization of the Ubl-conjugating enzyme (E2) at the E3:substrate complex. May play a role in embryonal development and tumor transformation or aspects of tumor progression. In vitro promotes cell viability in melanoma cell lines. Antigen recognized on a melanoma by autologous cytolytic T-lymphocytes. The polypeptide is Melanoma-associated antigen 3 (Homo sapiens (Human)).